We begin with the raw amino-acid sequence, 156 residues long: Small ribosomal subunit protein uS7 (156 aa).

The protein belongs to the universal ribosomal protein uS7 family. In terms of assembly, part of the 30S ribosomal subunit. Contacts proteins S9 and S11.

Its function is as follows. One of the primary rRNA binding proteins, it binds directly to 16S rRNA where it nucleates assembly of the head domain of the 30S subunit. Is located at the subunit interface close to the decoding center, probably blocks exit of the E-site tRNA. This chain is Small ribosomal subunit protein uS7, found in Leptothrix cholodnii (strain ATCC 51168 / LMG 8142 / SP-6) (Leptothrix discophora (strain SP-6)).